Here is a 365-residue protein sequence, read N- to C-terminus: 3-isopropylmalate dehydrogenase (365 aa).

Residue 80-91 coordinates NAD(+); it reads GPKWGTGAVRPE. 4 residues coordinate substrate: arginine 98, arginine 108, arginine 137, and aspartate 226. Mg(2+)-binding residues include aspartate 226, aspartate 251, and aspartate 255. 290-301 is an NAD(+) binding site; sequence GSAPDLPKGKVN.

This sequence belongs to the isocitrate and isopropylmalate dehydrogenases family. As to quaternary structure, homodimer. Mg(2+) is required as a cofactor. Requires Mn(2+) as cofactor.

It is found in the cytoplasm. It catalyses the reaction (2R,3S)-3-isopropylmalate + NAD(+) = 4-methyl-2-oxopentanoate + CO2 + NADH. It participates in amino-acid biosynthesis; L-leucine biosynthesis; L-leucine from 3-methyl-2-oxobutanoate: step 3/4. Catalyzes the oxidation of 3-carboxy-2-hydroxy-4-methylpentanoate (3-isopropylmalate) to 3-carboxy-4-methyl-2-oxopentanoate. The product decarboxylates to 4-methyl-2 oxopentanoate. The protein is 3-isopropylmalate dehydrogenase (LEU2) of Candida glabrata (strain ATCC 2001 / BCRC 20586 / JCM 3761 / NBRC 0622 / NRRL Y-65 / CBS 138) (Yeast).